A 667-amino-acid chain; its full sequence is Protein angel homolog 1 (667 aa).

S77 and S105 each carry phosphoserine.

The protein belongs to the CCR4/nocturin family.

The polypeptide is Protein angel homolog 1 (Mus musculus (Mouse)).